The sequence spans 174 residues: MALDNPTVLARLQAALPDALLGSSEFRGDLSVHVRPERIVDVARFLRDDPELRYHFLENLCGVDYLGREPRFEVVYHLLSFANRHRICLKVGVSERNPSVPSLTELWPGANYHERETFDMFGIVFTGHPCLDRILMPEDWEGHPLRKDVPLGAEEVAFTFNQDRIYAHKPFAKE.

The protein belongs to the complex I 30 kDa subunit family. In terms of assembly, NDH-1 is composed of 14 different subunits. Subunits NuoB, C, D, E, F, and G constitute the peripheral sector of the complex.

It is found in the cell membrane. It catalyses the reaction a quinone + NADH + 5 H(+)(in) = a quinol + NAD(+) + 4 H(+)(out). In terms of biological role, NDH-1 shuttles electrons from NADH, via FMN and iron-sulfur (Fe-S) centers, to quinones in the respiratory chain. The immediate electron acceptor for the enzyme in this species is believed to be ubiquinone. Couples the redox reaction to proton translocation (for every two electrons transferred, four hydrogen ions are translocated across the cytoplasmic membrane), and thus conserves the redox energy in a proton gradient. In Roseiflexus castenholzii (strain DSM 13941 / HLO8), this protein is NADH-quinone oxidoreductase subunit C.